The sequence spans 172 residues: Large ribosomal subunit protein uL11m (172 aa).

Belongs to the universal ribosomal protein uL11 family.

The protein resides in the mitochondrion. The polypeptide is Large ribosomal subunit protein uL11m (mrpl11) (Dictyostelium discoideum (Social amoeba)).